The sequence spans 208 residues: ATP synthase subunit beta, chloroplastic (208 aa).

Belongs to the ATPase alpha/beta chains family. In terms of assembly, F-type ATPases have 2 components, CF(1) - the catalytic core - and CF(0) - the membrane proton channel. CF(1) has five subunits: alpha(3), beta(3), gamma(1), delta(1), epsilon(1). CF(0) has four main subunits: a(1), b(1), b'(1) and c(9-12).

The protein localises to the plastid. It is found in the chloroplast thylakoid membrane. The catalysed reaction is ATP + H2O + 4 H(+)(in) = ADP + phosphate + 5 H(+)(out). Produces ATP from ADP in the presence of a proton gradient across the membrane. The catalytic sites are hosted primarily by the beta subunits. This Hypolepis hostilis (Fern) protein is ATP synthase subunit beta, chloroplastic (atpB).